The primary structure comprises 156 residues: ATP synthase subunit b (156 aa).

The chain crosses the membrane as a helical span at residues 7–27 (LIGQLIAFALFVAFCMKFVWP).

Belongs to the ATPase B chain family. As to quaternary structure, F-type ATPases have 2 components, F(1) - the catalytic core - and F(0) - the membrane proton channel. F(1) has five subunits: alpha(3), beta(3), gamma(1), delta(1), epsilon(1). F(0) has three main subunits: a(1), b(2) and c(10-14). The alpha and beta chains form an alternating ring which encloses part of the gamma chain. F(1) is attached to F(0) by a central stalk formed by the gamma and epsilon chains, while a peripheral stalk is formed by the delta and b chains.

The protein resides in the cell inner membrane. Functionally, f(1)F(0) ATP synthase produces ATP from ADP in the presence of a proton or sodium gradient. F-type ATPases consist of two structural domains, F(1) containing the extramembraneous catalytic core and F(0) containing the membrane proton channel, linked together by a central stalk and a peripheral stalk. During catalysis, ATP synthesis in the catalytic domain of F(1) is coupled via a rotary mechanism of the central stalk subunits to proton translocation. Its function is as follows. Component of the F(0) channel, it forms part of the peripheral stalk, linking F(1) to F(0). In Actinobacillus pleuropneumoniae serotype 7 (strain AP76), this protein is ATP synthase subunit b.